A 343-amino-acid polypeptide reads, in one-letter code: Holliday junction branch migration complex subunit RuvB (343 aa).

Residues 1-186 (MTEEFDIRQE…FGINLHLEYY (186 aa)) are large ATPase domain (RuvB-L). ATP contacts are provided by residues leucine 25, arginine 26, glycine 67, lysine 70, threonine 71, threonine 72, 133–135 (EDY), arginine 176, tyrosine 186, and arginine 223. A Mg(2+)-binding site is contributed by threonine 71. The interval 187–257 (DVHTITGIVE…IACYALEALN (71 aa)) is small ATPAse domain (RuvB-S). The segment at 260-343 (RYGLDNVDHK…PRPHRPSLFD (84 aa)) is head domain (RuvB-H). Residues arginine 315 and arginine 320 each coordinate DNA.

The protein belongs to the RuvB family. Homohexamer. Forms an RuvA(8)-RuvB(12)-Holliday junction (HJ) complex. HJ DNA is sandwiched between 2 RuvA tetramers; dsDNA enters through RuvA and exits via RuvB. An RuvB hexamer assembles on each DNA strand where it exits the tetramer. Each RuvB hexamer is contacted by two RuvA subunits (via domain III) on 2 adjacent RuvB subunits; this complex drives branch migration. In the full resolvosome a probable DNA-RuvA(4)-RuvB(12)-RuvC(2) complex forms which resolves the HJ.

It is found in the cytoplasm. The enzyme catalyses ATP + H2O = ADP + phosphate + H(+). In terms of biological role, the RuvA-RuvB-RuvC complex processes Holliday junction (HJ) DNA during genetic recombination and DNA repair, while the RuvA-RuvB complex plays an important role in the rescue of blocked DNA replication forks via replication fork reversal (RFR). RuvA specifically binds to HJ cruciform DNA, conferring on it an open structure. The RuvB hexamer acts as an ATP-dependent pump, pulling dsDNA into and through the RuvAB complex. RuvB forms 2 homohexamers on either side of HJ DNA bound by 1 or 2 RuvA tetramers; 4 subunits per hexamer contact DNA at a time. Coordinated motions by a converter formed by DNA-disengaged RuvB subunits stimulates ATP hydrolysis and nucleotide exchange. Immobilization of the converter enables RuvB to convert the ATP-contained energy into a lever motion, pulling 2 nucleotides of DNA out of the RuvA tetramer per ATP hydrolyzed, thus driving DNA branch migration. The RuvB motors rotate together with the DNA substrate, which together with the progressing nucleotide cycle form the mechanistic basis for DNA recombination by continuous HJ branch migration. Branch migration allows RuvC to scan DNA until it finds its consensus sequence, where it cleaves and resolves cruciform DNA. This is Holliday junction branch migration complex subunit RuvB from Porphyromonas gingivalis (strain ATCC BAA-308 / W83).